The chain runs to 258 residues: UPF0758 protein BamMC406_2419 (258 aa).

Residues 13-42 are disordered; the sequence is CRDPADAPAAPARHTGPARPRKRRPRNWKP. Positions 31–42 are enriched in basic residues; the sequence is RPRKRRPRNWKP. Residues 136 to 258 enclose the MPN domain; it reads QIDSPGAVED…TFSFARAGWL (123 aa). The Zn(2+) site is built by His207, His209, and Asp220. Residues 207-220 carry the JAMM motif motif; that stretch reads HNHPSGAVQPSAED.

The protein belongs to the UPF0758 family.

This Burkholderia ambifaria (strain MC40-6) protein is UPF0758 protein BamMC406_2419.